We begin with the raw amino-acid sequence, 437 residues long: O-methyltransferase 3 (437 aa).

The segment at 1–21 (MNNKTSNGDITNDEPTVGSKR) is disordered. Positions 146-180 (SDNLYQDKDDLEKQEKEREKKMANLLSKNVDIKEL) form a coiled coil. The interval 408-437 (DPINNNNNNNNNNNNNNNNTTTTTSTTTTN) is disordered. Residues 411–437 (NNNNNNNNNNNNNNNNTTTTTSTTTTN) are compositionally biased toward low complexity.

The protein belongs to the methyltransferase superfamily. METL family.

Probable methyltransferase. This chain is O-methyltransferase 3 (omt3), found in Dictyostelium discoideum (Social amoeba).